The chain runs to 340 residues: Putative transport protein AF_1800 (340 aa).

A run of 7 helical transmembrane segments spans residues 7–27 (LVLL…FTPL), 57–77 (SVIA…YGLI), 140–160 (TLLI…LADM), 193–213 (LWFG…PFFL), 225–245 (GLMF…ILPV), 260–280 (FLLI…RPYF), and 290–310 (LVLM…GFFI).

The protein belongs to the autoinducer-2 exporter (AI-2E) (TC 2.A.86) family.

Its subcellular location is the cell membrane. The chain is Putative transport protein AF_1800 from Archaeoglobus fulgidus (strain ATCC 49558 / DSM 4304 / JCM 9628 / NBRC 100126 / VC-16).